The following is a 1243-amino-acid chain: MDSFTPPLLSDSLQMAMEVENEKSNPPCFSCIFDNQNGGRSFSGESYLASGSLKRVLLRLDPSPNDYEEDAIEMFGFQWVTETALVESCGLLFGLLRQQIYKLEDLIEMNSSDFGKAANLHSEAENIRRLCINFLHYVKVFIFRYLEPPKTENDGVLHPYEELEAQFPSLLVEELHSLTLHIGHLCELPSNVLAAFTIQHQAKIFPPSWHLLHLHLDIHWLVLEILHVLSEKMMRQVVYANHFINLTGENLTNISLFETHCENLISDLISLSIQKYTKVRPSEALTSHHYPCNCIKELWILLIQLLGFRNKGSQTECFWSLVNKKLKSIFERPTSSESVSVFGTTQCKDPLSFSLWIVTHLASLYQFDRNGNLEEKKQKESNWKFVEELLKNSIGAQTGVLEEHLRMHLQCCLTLCRFWDWNLSVITILWDYYSKNLNSCFTVPWLGLKGLASISKTSLSMLELVKSCCCEQQIPTLYKSSNSYLIFLSILARMMKEEAESSGVHPWKQIKGRIYSKFHRKRMQELTEVGLQNFFNLFLLLAIVAETEDIVSRVLDLLDFLTPSLVSPSQRALIWRGHFAFLLIYVEKNMDISVLAEKLSNAFRVKAKEFLVTKNDYTQKQNLWTLISTYIDGVQEVFETSCYLSLSEEKLLNDGFTMLLPACRGAELSMVLNFLQVVIARLRSVHKRVSQGLQPGNADSNAQLPLVAKEHHLAVASALWRNFFPYLKSQRMSQTPPSPQLADTAAGFALLALDIPSKALSDLQPQPVLSMMQLFGWDDMVWPHLVSRYLSHLIQNSALCEAFSTMGYTSYEALTVRSWFRCVLQMFIDQPSGTLAKTDAERTVGKAYMEQLTEMTRLIFKLKEVESILSKARVEEPVLKQDPKNALVQFIKAVGRTYSGLQTLPEKSAMVLKALEYLGDVLKYVKPYLKAKGPPEGLQLAYWIIGCLVKFWAPILATSKAQQLLFRIIDCLLLPHSVLQQDKELPGALLSAIQESLHLYLQGLSFICCQSQARGAYLNQLLGSIVQQYFGRFLPPSPTALGAGQHPMLTALCSSITVPQALRLRKTTLHVINEHYMQFKGSAPPPRLASVLAFILEVLQRTQASELCDVELVLPAVLKCMVLVNELQVKKISTVIVQYMVQGCQARSGGEHATQLTSVFRQFIQDYTAVYDHRVFSILETVAVLDQTLVTSLIPTLTQSLKDSEYKQGLGRNAAQREAYKRLLTHLSEAGQNEIQKLENEAG.

Belongs to the MMS22 family. MMS22L subfamily. In terms of assembly, component of the MMS22L-TONSL complex.

It is found in the nucleus. The protein localises to the chromosome. Its function is as follows. Component of the MMS22L-TONSL complex, a complex that promotes homologous recombination-mediated repair of double-strand breaks (DSBs) at stalled or collapsed replication forks. The MMS22L-TONSL complex is required to maintain genome integrity during DNA replication. It mediates the assembly of RAD51 filaments on single-stranded DNA (ssDNA): the MMS22L-TONSL complex is recruited to DSBs following histone replacement by histone chaperones and eviction of the replication protein A complex (RPA/RP-A) from DSBs. Following recruitment to DSBs, the TONSL-MMS22L complex promotes recruitment of RAD51 filaments and subsequent homologous recombination. Within the complex, MMS22L acts by binding ssDNA. This is Protein MMS22-like (MMS22L) from Gallus gallus (Chicken).